A 663-amino-acid polypeptide reads, in one-letter code: Transforming growth factor beta activator LRRC32 (663 aa).

A signal peptide spans 1–17 (MSHQILLLLAMLTLGLA). Over 18–628 (ISQRREQVPC…CEKGGLKNVN (611 aa)) the chain is Extracellular. Positions 22–49 (REQVPCRTVNKEALCHGLGLLQVPSVLS) constitute an LRRNT domain. LRR repeat units lie at residues 49–72 (SLDIQALYLSGNQLQSILVSPLGF), 73–96 (YTALRHLDLSDNQISFLQAGVFQA), 98–123 (PYLEHLNLAHNRLATGMALNSGGLGR), 125–148 (PLLVSLDLSGNSLHGNLVERLLGE), 149–172 (TPRLRTLSLAENSLTRLARHTFWG), 174–196 (PAVEQLDLHSNVLMDIEDGAFEA), 197–220 (LPHLTHLNLSRNSLTCISDFSLQQ), 222–241 (QVLDLSCNSIEAFQTAPEPQ), 243–267 (QFQLAWLDLRENKLLHFPDLAVFPR), and 269–287 (IYLNVSNNLIQLPAGLPRG). N-linked (GlcNAc...) asparagine glycosylation is present at Asn204. N-linked (GlcNAc...) asparagine glycosylation is found at Asn272, Asn305, and Asn309. Positions 291–311 (LHAPSEGWSASPLSNPSRNAS) are disordered. The segment covering 301–311 (SPLSNPSRNAS) has biased composition (polar residues). 11 LRR repeats span residues 315–338 (LSQLLNLDLSYNEIELVPASFLEH), 340–362 (TSLRFLNLSRNCLRSFEARQVDS), 363–386 (LPCLVLLDLSHNVLEALELGTKVL), 387–409 (GSLQTLLLQDNALQELPPYTFAS), 411–433 (ASLQRLNLQGNQVSPCGGPAEPG), 443–466 (IPTLHVLNMAGNSMGMLRAGSFLH), 468–489 (PLTELDLSTNPGLDVATGALVG), 491–514 (EASLEVLELQGNGLTVLRVDLPCF), 515–539 (LRLKRLNLAENQLSHLPAWTRAVSL), 541–559 (VLDLRNNSFSLLPGNAMGG), and 561–584 (ETSLRRLYLQGNPLSCCGNGWLAA). N-linked (GlcNAc...) asparagine glycosylation occurs at Asn346. N-linked (GlcNAc...) asparagine glycosylation occurs at Asn546. Positions 572-621 (NPLSCCGNGWLAAQLHQGRVDVDATQDLICRFGSQEELSLSLVRPEDCEK) constitute an LRRCT domain. Residues 629–649 (LILLLSFTLVSAIVLTTLATI) traverse the membrane as a helical segment. The Cytoplasmic portion of the chain corresponds to 650–663 (CFLRRQKLSQQYKA).

The protein belongs to the LRRC32/LRRC33 family. Interacts with TGFB1; associates via disulfide bonds with the Latency-associated peptide chain (LAP) regulatory chain of TGFB1, leading to regulate activation of TGF-beta-1. Interacts with TGFB2. Interacts with TGFB3; associates via disulfide bonds with the Latency-associated peptide chain (LAP) regulatory chain of TGFB3, leading to regulate activation of TGF-beta-3. Interacts with LAPTM4B; decreases TGFB1 production in regulatory T-cells. As to expression, present in medial edge epithelial cells at 14.5 dpc (at protein level).

Its subcellular location is the cell membrane. It localises to the cell surface. Key regulator of transforming growth factor beta (TGFB1, TGFB2 and TGFB3) that controls TGF-beta activation by maintaining it in a latent state during storage in extracellular space. Associates specifically via disulfide bonds with the Latency-associated peptide (LAP), which is the regulatory chain of TGF-beta, and regulates integrin-dependent activation of TGF-beta. Able to outcompete LTBP1 for binding to LAP regulatory chain of TGF-beta. Controls activation of TGF-beta-1 (TGFB1) on the surface of activated regulatory T-cells (Tregs). Required for epithelial fusion during palate development by regulating activation of TGF-beta-3 (TGFB3). The sequence is that of Transforming growth factor beta activator LRRC32 from Mus musculus (Mouse).